The primary structure comprises 199 residues: Superoxide dismutase [Mn] 2 (199 aa).

Residues H28, H75, D157, and H161 each contribute to the Mn(2+) site.

This sequence belongs to the iron/manganese superoxide dismutase family. The cofactor is Mn(2+).

The catalysed reaction is 2 superoxide + 2 H(+) = H2O2 + O2. Destroys superoxide anion radicals which are normally produced within the cells and which are toxic to biological systems. This is Superoxide dismutase [Mn] 2 (sod2) from Haloferax volcanii (strain ATCC 29605 / DSM 3757 / JCM 8879 / NBRC 14742 / NCIMB 2012 / VKM B-1768 / DS2) (Halobacterium volcanii).